The primary structure comprises 209 residues: Orotate phosphoribosyltransferase (209 aa).

Residues Arg96, Lys100, His102, and 122 to 130 (EDLISTGGS) each bind 5-phospho-alpha-D-ribose 1-diphosphate. Position 126 (Ser126) interacts with orotate.

The protein belongs to the purine/pyrimidine phosphoribosyltransferase family. PyrE subfamily. In terms of assembly, homodimer. Requires Mg(2+) as cofactor.

The enzyme catalyses orotidine 5'-phosphate + diphosphate = orotate + 5-phospho-alpha-D-ribose 1-diphosphate. The protein operates within pyrimidine metabolism; UMP biosynthesis via de novo pathway; UMP from orotate: step 1/2. Catalyzes the transfer of a ribosyl phosphate group from 5-phosphoribose 1-diphosphate to orotate, leading to the formation of orotidine monophosphate (OMP). This is Orotate phosphoribosyltransferase from Lactococcus lactis subsp. cremoris (strain SK11).